The sequence spans 550 residues: Probable terpene synthase 2 (550 aa).

Mg(2+)-binding residues include Asp-305, Asp-309, and Glu-457. A DDXXD motif motif is present at residues 305–309; sequence DDIYD.

It belongs to the terpene synthase family. Mg(2+) serves as cofactor.

Functionally, probable sesquiterpene synthase. This chain is Probable terpene synthase 2 (TPS2), found in Ricinus communis (Castor bean).